The primary structure comprises 1742 residues: NACHT and WD repeat domain-containing protein 2 (1742 aa).

5 LRR repeats span residues 386 to 410 (FYEY…GHIN), 677 to 698 (LEDV…TRPS), 724 to 747 (VKNV…LYLQ), 883 to 906 (YSQE…VTAF), and 925 to 953 (LPKL…SSMD). Residues 410–737 (NPLIIYGGPC…TLLVWANRHL (328 aa)) form the NACHT domain. WD repeat units follow at residues 963 to 1004 (LSSS…LLRQ), 1007 to 1046 (TAQS…LLSE), 1140 to 1179 (FSGG…SPQL), 1229 to 1271 (KHNE…ASLQ), 1272 to 1311 (EISG…AMSN), 1314 to 1353 (KTGK…IEAV), 1355 to 1394 (KHEG…NLFR), 1396 to 1434 (NGQR…RVCN), 1476 to 1516 (EDGT…ICRR), 1522 to 1564 (NFLK…VHAS), and 1614 to 1653 (SLYK…DAAL).

This Homo sapiens (Human) protein is NACHT and WD repeat domain-containing protein 2 (NWD2).